A 240-amino-acid chain; its full sequence is Uridylate kinase (240 aa).

12-15 (KLSG) contacts ATP. Gly-54 serves as a coordination point for UMP. ATP is bound by residues Gly-55 and Arg-59. Residues Asp-74 and 135 to 142 (TGNPFFTT) contribute to the UMP site. Positions 162, 168, and 171 each coordinate ATP.

Belongs to the UMP kinase family. Homohexamer.

The protein localises to the cytoplasm. The catalysed reaction is UMP + ATP = UDP + ADP. It participates in pyrimidine metabolism; CTP biosynthesis via de novo pathway; UDP from UMP (UMPK route): step 1/1. Its activity is regulated as follows. Inhibited by UTP. Functionally, catalyzes the reversible phosphorylation of UMP to UDP. This is Uridylate kinase from Xanthomonas axonopodis pv. citri (strain 306).